The sequence spans 263 residues: 3-methyl-2-oxobutanoate hydroxymethyltransferase (263 aa).

Asp44 and Asp83 together coordinate Mg(2+). 3-methyl-2-oxobutanoate is bound by residues 44–45 (DS), Asp83, and Lys112. Glu114 is a binding site for Mg(2+). The active-site Proton acceptor is Glu181.

The protein belongs to the PanB family. Homodecamer; pentamer of dimers. The cofactor is Mg(2+).

The protein resides in the cytoplasm. The enzyme catalyses 3-methyl-2-oxobutanoate + (6R)-5,10-methylene-5,6,7,8-tetrahydrofolate + H2O = 2-dehydropantoate + (6S)-5,6,7,8-tetrahydrofolate. It participates in cofactor biosynthesis; (R)-pantothenate biosynthesis; (R)-pantoate from 3-methyl-2-oxobutanoate: step 1/2. In terms of biological role, catalyzes the reversible reaction in which hydroxymethyl group from 5,10-methylenetetrahydrofolate is transferred onto alpha-ketoisovalerate to form ketopantoate. The protein is 3-methyl-2-oxobutanoate hydroxymethyltransferase of Nitrosospira multiformis (strain ATCC 25196 / NCIMB 11849 / C 71).